The following is a 452-amino-acid chain: Dimethyladenosine transferase 2, mitochondrial (452 aa).

Residues isoleucine 46, glutamate 99, and aspartate 125 each contribute to the S-adenosyl-L-methionine site. Positions 408 to 452 (ANDEPNLEDGVTLPEEDDAEADEIIEEESPVPATTPVKRRRKASS) are disordered. Residues 421 to 436 (PEEDDAEADEIIEEES) are compositionally biased toward acidic residues.

It belongs to the class I-like SAM-binding methyltransferase superfamily. rRNA adenine N(6)-methyltransferase family. KsgA subfamily.

It is found in the mitochondrion. Functionally, probable S-adenosyl-L-methionine-dependent methyltransferase which specifically dimethylates mitochondrial 12S rRNA at the conserved stem loop. Also required for basal transcription of mitochondrial DNA. Also regulates mitochondrial DNA copy number. Stimulates transcription independently of the methyltransferase activity. This chain is Dimethyladenosine transferase 2, mitochondrial (mtTFB2), found in Drosophila melanogaster (Fruit fly).